The following is a 354-amino-acid chain: Ribosomal RNA large subunit methyltransferase M (354 aa).

Residues Ser183, 216 to 219 (SPGG), Asp235, Asp255, and Asp271 each bind S-adenosyl-L-methionine. Lys300 acts as the Proton acceptor in catalysis.

It belongs to the class I-like SAM-binding methyltransferase superfamily. RNA methyltransferase RlmE family. RlmM subfamily. In terms of assembly, monomer.

Its subcellular location is the cytoplasm. It carries out the reaction cytidine(2498) in 23S rRNA + S-adenosyl-L-methionine = 2'-O-methylcytidine(2498) in 23S rRNA + S-adenosyl-L-homocysteine + H(+). In terms of biological role, catalyzes the 2'-O-methylation at nucleotide C2498 in 23S rRNA. This chain is Ribosomal RNA large subunit methyltransferase M, found in Pseudomonas entomophila (strain L48).